The sequence spans 142 residues: Large ribosomal subunit protein uL13 (142 aa).

It belongs to the universal ribosomal protein uL13 family. In terms of assembly, part of the 50S ribosomal subunit.

This protein is one of the early assembly proteins of the 50S ribosomal subunit, although it is not seen to bind rRNA by itself. It is important during the early stages of 50S assembly. This Cellvibrio japonicus (strain Ueda107) (Pseudomonas fluorescens subsp. cellulosa) protein is Large ribosomal subunit protein uL13.